Here is a 421-residue protein sequence, read N- to C-terminus: MKQTITEKIFSDHVGKEVSAGEIIESKIDMIIGNDITTPISIKQFERSGAKKLANPDGFAIVMDHYIPTKDILSANQAKISREFAYKHDLKNYFDEKDMGIEHAILPEKGLVIPGDVIIGADSHTCTHGALGAFSTGMGSTDLAYAMITGKNWFKVPESIKVVFKGKLDKHVYGKDLILEIIRQIGVDGALYKALEFSGEVIDGLSMDDRFSMCNMAIEAGAKSGIIAVDEITKEFLKDKNLRDKPKFFYSDEGAKYDKILEIDVTNLDPVIAYPFLPSNGKSVRQAVRDDLAIDQAFIGSCTNGRLSDLRIAAQILKGKKVARKTRLIITPATQKIARAAEKEGLIDIFIEAGAVVSNPTCGACLGGYMGILGANERCISTTNRNFVGRMGDRTSEIYLANSAVVAASAIAGKIADPRDL.

Positions 302, 362, and 365 each coordinate [4Fe-4S] cluster.

The protein belongs to the aconitase/IPM isomerase family. LeuC type 2 subfamily. In terms of assembly, heterodimer of LeuC and LeuD. It depends on [4Fe-4S] cluster as a cofactor.

The enzyme catalyses (2R,3S)-3-isopropylmalate = (2S)-2-isopropylmalate. Its pathway is amino-acid biosynthesis; L-leucine biosynthesis; L-leucine from 3-methyl-2-oxobutanoate: step 2/4. In terms of biological role, catalyzes the isomerization between 2-isopropylmalate and 3-isopropylmalate, via the formation of 2-isopropylmaleate. This Campylobacter concisus (strain 13826) protein is 3-isopropylmalate dehydratase large subunit.